A 444-amino-acid chain; its full sequence is N-succinylarginine dihydrolase (444 aa).

Substrate contacts are provided by residues 19–28 (SGLSVGNIAS), Asn-110, and 137–138 (HR). Glu-174 is a catalytic residue. Residue Arg-214 coordinates substrate. His-250 is a catalytic residue. Residues Asp-252 and Asn-362 each coordinate substrate. Cys-368 serves as the catalytic Nucleophile.

It belongs to the succinylarginine dihydrolase family. As to quaternary structure, homodimer.

The catalysed reaction is N(2)-succinyl-L-arginine + 2 H2O + 2 H(+) = N(2)-succinyl-L-ornithine + 2 NH4(+) + CO2. It participates in amino-acid degradation; L-arginine degradation via AST pathway; L-glutamate and succinate from L-arginine: step 2/5. Catalyzes the hydrolysis of N(2)-succinylarginine into N(2)-succinylornithine, ammonia and CO(2). The polypeptide is N-succinylarginine dihydrolase (Aliivibrio fischeri (strain ATCC 700601 / ES114) (Vibrio fischeri)).